The primary structure comprises 107 residues: UPF0145 protein ETA_21660 (107 aa).

The protein belongs to the UPF0145 family.

The polypeptide is UPF0145 protein ETA_21660 (Erwinia tasmaniensis (strain DSM 17950 / CFBP 7177 / CIP 109463 / NCPPB 4357 / Et1/99)).